Consider the following 403-residue polypeptide: Phosphoglycerate kinase (403 aa).

Residues 21 to 23 (DFN), arginine 36, 59 to 62 (HLGR), arginine 119, and arginine 154 contribute to the substrate site. ATP is bound by residues lysine 207, glycine 299, glutamate 330, and 357-360 (GGDA).

This sequence belongs to the phosphoglycerate kinase family. As to quaternary structure, monomer.

Its subcellular location is the cytoplasm. It catalyses the reaction (2R)-3-phosphoglycerate + ATP = (2R)-3-phospho-glyceroyl phosphate + ADP. It functions in the pathway carbohydrate degradation; glycolysis; pyruvate from D-glyceraldehyde 3-phosphate: step 2/5. This Chlamydia trachomatis serovar L2 (strain ATCC VR-902B / DSM 19102 / 434/Bu) protein is Phosphoglycerate kinase.